The chain runs to 169 residues: Fumarase E (169 aa).

This sequence belongs to the MtlR/FumE family.

The catalysed reaction is (S)-malate = fumarate + H2O. In vitro catalyzes the addition of water to fumarate, forming malate. Cannot catalyze the reverse reaction. Cannot use the cis-isomer maleate as substrate. This Escherichia coli (strain K12) protein is Fumarase E.